We begin with the raw amino-acid sequence, 468 residues long: Malate-2H(+)/Na(+)-lactate antiporter (468 aa).

The next 12 helical transmembrane spans lie at 9 to 29, 30 to 50, 73 to 93, 96 to 116, 136 to 156, 192 to 212, 233 to 253, 258 to 278, 309 to 329, 357 to 377, 405 to 425, and 428 to 448; these read LFEI…FTVF, LDLP…LLGI, AVLI…GGVV, LIYY…TLII, IAMI…AGAI, LYLS…VGFM, TFDI…LLAM, MPVI…FQGM, IVGM…GGLL, LIVA…LILT, LTSG…ILGV, and FSYL…IIYG.

It belongs to the NhaC Na(+)/H(+) (TC 2.A.35) antiporter family.

It is found in the cell membrane. Functionally, couples proton uptake and Na(+) efflux to the substrate-product malate/lactate antiport, in an electroneutral malate-2H(+)/Na(+)-lactate exchange. Plays a role in supporting growth to high density on malate at reduced protonmotive force. The sequence is that of Malate-2H(+)/Na(+)-lactate antiporter (mleN) from Bacillus subtilis (strain 168).